Consider the following 547-residue polypeptide: MTRLQRLFRIAWVFCRYRLDTFLPLSELPTPLKIFFLLAPWHLFPQPKLSRGDRLRLALEELGPVFVKFGQILSTRRDLLPDDMAESLKQLQDRVPPFPSEQARGIIEKSLGAPVSELFAEFSPDPMASASVAQVHAATLPNGQKVVVKVLRPGIEKVIRQDLGLMYLMAGLLEKYWSEGKRLHPVEVVADYDSTIHDELDLQREAANASQLRRNFENSPLIYIPFIDWDYTRKSVLVMERIHGIPIADVPALEKAGVNMRVLAEKGVEIFFTQVFRDSFFHADMHPGNIFVDVSNPADPKYIAIDFGIVGTLAPDDQSYLARNLLAFFRRDYRQVAQLHIQSGWVPPETRVNEFEAAIRTVCEPIFERPLKDISFGHFLLRLFQTARRFNMEVQPQLVLLQKTLLNVEGLGRQLYPDLDLWSTAQPFLEDWMRKRIGPSGLIKSLQNHLPSWLEQSPEMPQLVHDALLQIRSSGPTEAQNRATLALMKEQQLRSERRWRRGFIALVLAGAALVGSQPHAGQWLADLPVWSWALLAGAAGVMLRGSR.

One can recognise a Protein kinase domain in the interval glutamate 121–arginine 501. ATP-binding positions include methionine 127–valine 135 and lysine 149. Aspartate 284 (proton acceptor) is an active-site residue. Helical transmembrane passes span glycine 502–glutamine 522 and tryptophan 523–leucine 543.

Belongs to the ABC1 family. UbiB subfamily.

Its subcellular location is the cell inner membrane. It participates in cofactor biosynthesis; ubiquinone biosynthesis [regulation]. Is probably a protein kinase regulator of UbiI activity which is involved in aerobic coenzyme Q (ubiquinone) biosynthesis. This Marinobacter nauticus (strain ATCC 700491 / DSM 11845 / VT8) (Marinobacter aquaeolei) protein is Probable protein kinase UbiB.